Reading from the N-terminus, the 303-residue chain is Quinolinate synthase (303 aa).

Residues His24 and Ser41 each contribute to the iminosuccinate site. Cys86 serves as a coordination point for [4Fe-4S] cluster. Residues 112–114 (YVN) and Ser129 contribute to the iminosuccinate site. Cys172 provides a ligand contact to [4Fe-4S] cluster. Iminosuccinate is bound by residues 198–200 (HPE) and Thr215. A [4Fe-4S] cluster-binding site is contributed by Cys260.

Belongs to the quinolinate synthase family. Type 2 subfamily. It depends on [4Fe-4S] cluster as a cofactor.

It is found in the cytoplasm. It carries out the reaction iminosuccinate + dihydroxyacetone phosphate = quinolinate + phosphate + 2 H2O + H(+). The protein operates within cofactor biosynthesis; NAD(+) biosynthesis; quinolinate from iminoaspartate: step 1/1. Its function is as follows. Catalyzes the condensation of iminoaspartate with dihydroxyacetone phosphate to form quinolinate. The chain is Quinolinate synthase from Alkaliphilus metalliredigens (strain QYMF).